The sequence spans 589 residues: PAN2-PAN3 deadenylation complex subunit pan3 (589 aa).

Residues 1-32 form a disordered region; it reads MSVRKNSPASPKPTSRSRESSRSPSVTDLKDH. The C3H1-type zinc finger occupies 34-63; the sequence is KAKRTLCRNILLYGSCKHSENGCAFRHDGP. The PABPC-interacting motif-2 (PAM-2) signature appears at 74–94; the sequence is YSVKKKLNAASASFQPVRALP. The pseudokinase domain stretch occupies residues 201 to 457; sequence EASRQTISAL…NLELFLQNHI (257 aa). Residues Lys255 and 302–309 each bind ATP; that span reads DFYPCTTT. Residues 458–496 adopt a coiled-coil conformation; that stretch reads ESFFPIMSSPYVECEKMERKISDAFQHGRFFNILCKIMF. A knob domain region spans residues 497–589; sequence IIDNNRASRE…DNVYEMEINS (93 aa).

It belongs to the protein kinase superfamily. PAN3 family. Homodimer. Forms a heterotrimer with a catalytic subunit pan2 to form the poly(A)-nuclease (PAN) deadenylation complex. Interacts (via PAM-2 motif) with poly(A)-binding protein pab1 (via PABC domain), conferring substrate specificity of the enzyme complex.

It is found in the cytoplasm. Its subcellular location is the nucleus. Regulatory subunit of the poly(A)-nuclease (PAN) deadenylation complex, one of two cytoplasmic mRNA deadenylases involved in mRNA turnover. PAN specifically shortens poly(A) tails of RNA and the activity is stimulated by poly(A)-binding protein pab1. PAN deadenylation is followed by rapid degradation of the shortened mRNA tails by the CCR4-NOT complex. Deadenylated mRNAs are then degraded by two alternative mechanisms, namely exosome-mediated 3'-5' exonucleolytic degradation, or deadenylation-dependent mRNA decaping and subsequent 5'-3' exonucleolytic degradation by xrn1. May also be involved in post-transcriptional maturation of mRNA poly(A) tails. ppk26/pan3 acts as a positive regulator for PAN activity, recruiting the catalytic subunit pan2 to mRNA via its interaction with RNA and with pab1. This chain is PAN2-PAN3 deadenylation complex subunit pan3 (ppk26), found in Schizosaccharomyces pombe (strain 972 / ATCC 24843) (Fission yeast).